Reading from the N-terminus, the 72-residue chain is Protein kish (72 aa).

The signal sequence occupies residues 1-26 (MVAIFNFQSLLVVILLFICTCTYIRG). Over 27–47 (SYPSLLEVRDKHSFSGLPRKA) the chain is Extracellular. A helical membrane pass occupies residues 48–68 (AIIGERLSPWVSACCLIMGLW). The Cytoplasmic segment spans residues 69–72 (TLYN).

The protein belongs to the KISH family.

Its subcellular location is the golgi apparatus membrane. Involved in the early part of the secretory pathway. This Dictyostelium discoideum (Social amoeba) protein is Protein kish (tmem167).